A 769-amino-acid polypeptide reads, in one-letter code: Serine protease HtrA-like (769 aa).

A compositionally biased stretch (basic residues) spans 1–20; that stretch reads MDIGKKHVIPKSQYRRKRRE. A disordered region spans residues 1-388; sequence MDIGKKHVIP…KKATSKLNKG (388 aa). 3 stretches are compositionally biased toward basic and acidic residues: residues 21–64, 71–87, and 96–108; these read FFHN…ERFK, LEQRNRDVNENKAEESK, and YNKDHYLTDDVSK. The span at 126–139 shows a compositional bias: polar residues; it reads YEQNTEATLSTNST. A compositionally biased stretch (basic and acidic residues) spans 140–186; it reads DKVESTDMRKLSSDKNKVGHEEQHVLSKPSEHDKETRIDFESSRTDS. The segment covering 247–262 has biased composition (polar residues); that stretch reads QQSQNEQTKTYTYGDS. 2 stretches are compositionally biased toward basic and acidic residues: residues 264 to 296 and 310 to 330; these read QNDKSNHENDLSHHTPSISDDKDYVMREDHIVD and KIDDDRKLDEKIHVEDKHKQN. Polar residues predominate over residues 331–347; it reads ADSSETVGYQSQSSASH. The segment covering 348–364 has biased composition (basic and acidic residues); that stretch reads RSTEKRNMAINDHDKLN. Positions 366–388 are enriched in polar residues; sequence QKPNTKTSANNNQKKATSKLNKG. A helical transmembrane segment spans residues 410–430; the sequence is LVILMGIIILIVILNAIFNNV. Active-site charge relay system residues include histidine 504, aspartate 534, and serine 619. One can recognise a PDZ domain in the interval 680-733; it reads IASLNSFERQAVKLLGKVKNGVVVDQVDNNGLADQSGLKKGDVITELDGKLLED.

The protein belongs to the peptidase S1C family.

It is found in the cell membrane. The polypeptide is Serine protease HtrA-like (Staphylococcus aureus (strain MRSA252)).